A 1078-amino-acid polypeptide reads, in one-letter code: MESAKDTTSTSMFILGKPSGNNMESNEERMQNYHPDPVVEESIKEILEESLKCDVSFESLLFPELEAFDLFIPESSNDIASKNVSYSSNVEEGASDEFKTLVAQSVGNCIQSIGASVKAAMKQEQSNMEDNLINSAGLLTLHRSMLERLVLEQLGQLININLLSSASSQFVSCYAKMLSGKNLDFFNWCEPRFIVFACDKFDGLVKKIASESRDLLMDLKANMNNQFITALKNIFSKAYVALDSGKLNMVATSLLLMAHNKEMSNPEISNKEFCKQVNLLKQELLESRNEIIENHVKNMKMFQEFANKQMNQIFMDNCDKTFLKIHINCKNLITAAKNIGIAVLQSIVLCSNEFSWQYLKPRRHQFKITMMNMITHACECIETIYDDTGLIKPLTSSDIMEGYIAINKNRESSICDLNIDPSESILLELADFDEHGKYSEESSIESIHEDDDNVDYLKYMEVQSPTDNNIPTPSKNNESPTRQKLTNIHEKDVGKMYPDTPSPDVPGKSKEAKTFIEYSRQIGKEQTSPNCVCTASVTDLGGPDNFKSITGLESGKHFLIKKLLETQPDSVVVETGSGQQDILAYSPDKRSQTKEWIQEKGSNSKCTETLPGMTFTNSATPVKSHGAIQDTLNPESKLDKEMEAVESLVNLCDGFHDNPLISEMITFGYETDHSAPYESESDNNDETDYIADCDSTVRTNNIHMNNTNENTPFSKSLYSPPEVTPSKEDHKTEKIVAVSQKCKSKKRTAKRKNVPIKPSKSKKIKLDRLPETTNVIVISSESEDEEDGNNIIDKSMLEKTIKSEPNSESSSESDDCTSEDNYLHLSDYDKVINNGHCQSKGFPSPVFTIPIRSMPGTHDIRNKFVPKKHWLWFMRKTHKVDNCVIHSSAKMNVKNDSDVTEANHCFINHFVPIKTDDEEYEKENVSYTYSKIQDSKTDLEDITPTKKLITEMVMENFMDLTDIIKHGIAKHCQDLSSKYTVITHTACEKNLNVANSQNLVTAETQIFDPQGTGNNSPILNIINDTTCQNDENRCTEGTSNDNEKCTIRSDCNSDKMEVFKLDGYPSDYDPFEENAQIY.

The segment covering 1–12 (MESAKDTTSTSM) has biased composition (polar residues). Disordered stretches follow at residues 1–28 (MESAKDTTSTSMFILGKPSGNNMESNEE), 464–483 (SPTDNNIPTPSKNNESPTRQ), 703–732 (HMNNTNENTPFSKSLYSPPEVTPSKEDHKT), and 781–818 (ESEDEEDGNNIIDKSMLEKTIKSEPNSESSSESDDCTS).

The protein is Protein U90 (U90) of Homo sapiens (Human).